Reading from the N-terminus, the 469-residue chain is D-3-phosphoglycerate dehydrogenase 1 (469 aa).

Serine 22, serine 29, and serine 33 each carry phosphoserine. Residues 208-209, aspartate 228, 285-287, and aspartate 311 contribute to the NAD(+) site; these read HI and ASR. Arginine 287 is an active-site residue. The active site involves glutamate 316. Histidine 347 serves as the catalytic Proton donor. 347–350 serves as a coordination point for NAD(+); the sequence is HIGG. The 71-residue stretch at 399 to 469 folds into the ACT domain; it reads RVLYIHQNVP…SAKISIRLLY (71 aa).

Belongs to the D-isomer specific 2-hydroxyacid dehydrogenase family.

The enzyme catalyses (2R)-3-phosphoglycerate + NAD(+) = 3-phosphooxypyruvate + NADH + H(+). It catalyses the reaction (R)-2-hydroxyglutarate + NAD(+) = 2-oxoglutarate + NADH + H(+). Its pathway is amino-acid biosynthesis; L-serine biosynthesis; L-serine from 3-phospho-D-glycerate: step 1/3. Its function is as follows. Catalyzes the reversible oxidation of 3-phospho-D-glycerate to 3-phosphonooxypyruvate, the first step of the phosphorylated L-serine biosynthesis pathway. Also catalyzes the reversible oxidation of 2-hydroxyglutarate to 2-oxoglutarate. The protein is D-3-phosphoglycerate dehydrogenase 1 (SER3) of Saccharomyces cerevisiae (strain ATCC 204508 / S288c) (Baker's yeast).